We begin with the raw amino-acid sequence, 135 residues long: Small ribosomal subunit protein bS16 (135 aa).

A disordered region spans residues 106-135 (TERRQKRLVVKSRRRQAKKEAEGKAAGAEA). The segment covering 109–122 (RQKRLVVKSRRRQA) has biased composition (basic residues).

This sequence belongs to the bacterial ribosomal protein bS16 family.

This is Small ribosomal subunit protein bS16 from Chlorobium phaeobacteroides (strain DSM 266 / SMG 266 / 2430).